A 98-amino-acid chain; its full sequence is NADH-ubiquinone oxidoreductase chain 4L (98 aa).

Transmembrane regions (helical) follow at residues 1–21, 29–49, and 61–81; these read MSMV…GLLM, SLLC…VTIL, and IILL…LVMV.

The protein belongs to the complex I subunit 4L family. In terms of assembly, core subunit of respiratory chain NADH dehydrogenase (Complex I) which is composed of 45 different subunits.

The protein localises to the mitochondrion inner membrane. The catalysed reaction is a ubiquinone + NADH + 5 H(+)(in) = a ubiquinol + NAD(+) + 4 H(+)(out). Functionally, core subunit of the mitochondrial membrane respiratory chain NADH dehydrogenase (Complex I) which catalyzes electron transfer from NADH through the respiratory chain, using ubiquinone as an electron acceptor. Part of the enzyme membrane arm which is embedded in the lipid bilayer and involved in proton translocation. The protein is NADH-ubiquinone oxidoreductase chain 4L (MT-ND4L) of Phoca fasciata (Ribbon seal).